A 256-amino-acid chain; its full sequence is Hydroxyacylglutathione hydrolase (256 aa).

Zn(2+)-binding residues include H54, H56, D58, H59, H113, D136, and H174.

This sequence belongs to the metallo-beta-lactamase superfamily. Glyoxalase II family. Monomer. Requires Zn(2+) as cofactor.

The enzyme catalyses an S-(2-hydroxyacyl)glutathione + H2O = a 2-hydroxy carboxylate + glutathione + H(+). It participates in secondary metabolite metabolism; methylglyoxal degradation; (R)-lactate from methylglyoxal: step 2/2. Functionally, thiolesterase that catalyzes the hydrolysis of S-D-lactoyl-glutathione to form glutathione and D-lactic acid. The polypeptide is Hydroxyacylglutathione hydrolase (Cyanothece sp. (strain PCC 7425 / ATCC 29141)).